Here is a 60-residue protein sequence, read N- to C-terminus: SRRERTIYTPEQLEAMEEVFGVNRYPDVSMREELASRLGINESKIQVWFKNRRAKLRNLE.

A DNA-binding region (homeobox) is located at residues 1–60; the sequence is SRRERTIYTPEQLEAMEEVFGVNRYPDVSMREELASRLGINESKIQVWFKNRRAKLRNLE.

This sequence belongs to the paired homeobox family. Bicoid subfamily.

Its subcellular location is the nucleus. This is Homeobox protein EgHBX4 (HBX4) from Echinococcus granulosus (Hydatid tapeworm).